Consider the following 39-residue polypeptide: Photosystem II reaction center protein L (39 aa).

The helical transmembrane segment at 18-38 (SLYLGLLLVFVTGVLFSSYFF) threads the bilayer.

Belongs to the PsbL family. PSII is composed of 1 copy each of membrane proteins PsbA, PsbB, PsbC, PsbD, PsbE, PsbF, PsbH, PsbI, PsbJ, PsbK, PsbL, PsbM, PsbT, PsbX, PsbY, PsbZ, Psb30/Ycf12, peripheral proteins PsbO, CyanoQ (PsbQ), PsbU, PsbV and a large number of cofactors. It forms dimeric complexes.

It is found in the cellular thylakoid membrane. Its function is as follows. One of the components of the core complex of photosystem II (PSII). PSII is a light-driven water:plastoquinone oxidoreductase that uses light energy to abstract electrons from H(2)O, generating O(2) and a proton gradient subsequently used for ATP formation. It consists of a core antenna complex that captures photons, and an electron transfer chain that converts photonic excitation into a charge separation. This subunit is found at the monomer-monomer interface and is required for correct PSII assembly and/or dimerization. The polypeptide is Photosystem II reaction center protein L (Synechococcus sp. (strain RCC307)).